A 60-amino-acid chain; its full sequence is Cytotoxin 5 (60 aa).

Intrachain disulfides connect cysteine 3-cysteine 21, cysteine 14-cysteine 38, cysteine 42-cysteine 53, and cysteine 54-cysteine 59.

Belongs to the three-finger toxin family. Short-chain subfamily. Type IA cytotoxin sub-subfamily. In terms of assembly, monomer in solution; Homodimer and oligomer in the presence of negatively charged lipids forming a pore with a size ranging between 20 and 30 Angstroms. In terms of tissue distribution, expressed by the venom gland.

Its subcellular location is the secreted. It localises to the target cell membrane. Functionally, shows cytolytic activity on many different cells by forming pore in lipid membranes. In vivo, increases heart rate or kills the animal by cardiac arrest. In addition, it binds to heparin with high affinity, interacts with Kv channel-interacting protein 1 (KCNIP1) in a calcium-independent manner, and binds to integrin alpha-V/beta-3 (ITGAV/ITGB3) with moderate affinity. In Naja annulifera (Banded Egyptian cobra), this protein is Cytotoxin 5.